The chain runs to 139 residues: Protein Turandot B (139 aa).

The signal sequence occupies residues 1-21 (MNFKTALICFALLLIGTLCSA).

Belongs to the Turandot family.

The protein localises to the secreted. Functionally, a humoral factor that may play a role in stress tolerance. In Drosophila sechellia (Fruit fly), this protein is Protein Turandot B.